Consider the following 194-residue polypeptide: Xanthine phosphoribosyltransferase (194 aa).

Xanthine-binding residues include Leu20 and Asn27. 128-132 (ANGEA) lines the 5-phospho-alpha-D-ribose 1-diphosphate pocket. Lys156 lines the xanthine pocket.

This sequence belongs to the purine/pyrimidine phosphoribosyltransferase family. Xpt subfamily. As to quaternary structure, homodimer.

Its subcellular location is the cytoplasm. The catalysed reaction is XMP + diphosphate = xanthine + 5-phospho-alpha-D-ribose 1-diphosphate. It participates in purine metabolism; XMP biosynthesis via salvage pathway; XMP from xanthine: step 1/1. Converts the preformed base xanthine, a product of nucleic acid breakdown, to xanthosine 5'-monophosphate (XMP), so it can be reused for RNA or DNA synthesis. This is Xanthine phosphoribosyltransferase from Macrococcus caseolyticus (strain JCSC5402) (Macrococcoides caseolyticum).